Here is a 265-residue protein sequence, read N- to C-terminus: Hydroxyacylglutathione hydrolase (265 aa).

Zn(2+)-binding residues include H53, H55, D57, H58, H109, D126, and H164.

It belongs to the metallo-beta-lactamase superfamily. Glyoxalase II family. In terms of assembly, monomer. Zn(2+) serves as cofactor.

It carries out the reaction an S-(2-hydroxyacyl)glutathione + H2O = a 2-hydroxy carboxylate + glutathione + H(+). Its pathway is secondary metabolite metabolism; methylglyoxal degradation; (R)-lactate from methylglyoxal: step 2/2. Functionally, thiolesterase that catalyzes the hydrolysis of S-D-lactoyl-glutathione to form glutathione and D-lactic acid. This Dechloromonas aromatica (strain RCB) protein is Hydroxyacylglutathione hydrolase.